The sequence spans 383 residues: tRNA (guanine(26)-N(2))-dimethyltransferase (383 aa).

In terms of domain architecture, Trm1 methyltransferase spans 4–371 (EIITEGRTPL…ASPEEFEAVL (368 aa)). S-adenosyl-L-methionine-binding residues include Arg38, Arg63, Asp80, Asp108, and Ala109. Zn(2+)-binding residues include Cys243, Cys246, Cys258, and Cys261.

It belongs to the class I-like SAM-binding methyltransferase superfamily. Trm1 family.

The catalysed reaction is guanosine(26) in tRNA + 2 S-adenosyl-L-methionine = N(2)-dimethylguanosine(26) in tRNA + 2 S-adenosyl-L-homocysteine + 2 H(+). Dimethylates a single guanine residue at position 26 of a number of tRNAs using S-adenosyl-L-methionine as donor of the methyl groups. This chain is tRNA (guanine(26)-N(2))-dimethyltransferase, found in Methanopyrus kandleri (strain AV19 / DSM 6324 / JCM 9639 / NBRC 100938).